Consider the following 633-residue polypeptide: Polypeptide N-acetylgalactosaminyltransferase 3 (633 aa).

Topologically, residues 1-19 are cytoplasmic; sequence MAHLKRLVKLHIKRHYHKK. A helical; Signal-anchor for type II membrane protein membrane pass occupies residues 20-37; the sequence is FWKLGAVIFFFIIVLVLM. Residues 38–633 are Lumenal-facing; it reads QREVSVQYSK…LQKWILSQND (596 aa). Residue asparagine 132 is glycosylated (N-linked (GlcNAc...) asparagine). The interval 184–293 is catalytic subdomain A; it reads LPTTSVIIVF…YGWLEPLLAR (110 aa). Residues aspartate 277 and histidine 279 each contribute to the Mn(2+) site. Asparagine 297 carries an N-linked (GlcNAc...) asparagine glycan. The interval 356–418 is catalytic subdomain B; that stretch reads PIKTPTFAGG…PCSVVGHVFR (63 aa). Histidine 415 is a Mn(2+) binding site. The N-linked (GlcNAc...) asparagine glycan is linked to asparagine 484. In terms of domain architecture, Ricin B-type lectin spans 504–630; the sequence is VISGYIKSVG…SDPLQKWILS (127 aa). Cysteines 517 and 535 form a disulfide. UDP-N-acetyl-alpha-D-galactosamine is bound by residues aspartate 519, glutamate 522, histidine 536, and asparagine 541. 2 disulfide bridges follow: cysteine 561/cysteine 574 and cysteine 605/cysteine 618.

The protein belongs to the glycosyltransferase 2 family. GalNAc-T subfamily. Mn(2+) is required as a cofactor. As to expression, expressed in organs that contain secretory epithelial glands. Highly expressed in pancreas, skin, kidney and testis. Weakly expressed in prostate, ovary, intestine and colon. Also expressed in placenta and lung and fetal lung and fetal kidney.

Its subcellular location is the golgi apparatus. It is found in the golgi stack membrane. It catalyses the reaction L-seryl-[protein] + UDP-N-acetyl-alpha-D-galactosamine = a 3-O-[N-acetyl-alpha-D-galactosaminyl]-L-seryl-[protein] + UDP + H(+). The enzyme catalyses L-threonyl-[protein] + UDP-N-acetyl-alpha-D-galactosamine = a 3-O-[N-acetyl-alpha-D-galactosaminyl]-L-threonyl-[protein] + UDP + H(+). The protein operates within protein modification; protein glycosylation. Catalyzes the initial reaction in O-linked oligosaccharide biosynthesis, the transfer of an N-acetyl-D-galactosamine residue to a serine or threonine residue on the protein receptor. Has activity toward HIV envelope glycoprotein gp120, EA2, MUC2, MUC1A and MUC5AC. Probably glycosylates fibronectin in vivo. Glycosylates FGF23. In Homo sapiens (Human), this protein is Polypeptide N-acetylgalactosaminyltransferase 3 (GALNT3).